Reading from the N-terminus, the 155-residue chain is MHPFQWCNGCFCGLGLVSTNKSCSMPPISFQDLPLNIYMVIFGTGIFVFMLSLIFCCYFISKLRNQAQSERYGYKEVVLKGDAKKLQLYGQTCAVCLEDFKGKDELGVLPCQHAFHRKCLVKWLEVRCVCPMCNKPIASPSEATQNIGILLDELV.

A helical transmembrane segment spans residues 40-60 (VIFGTGIFVFMLSLIFCCYFI). An RING-type; atypical zinc finger spans residues 93–134 (CAVCLEDFKGKDELGVLPCQHAFHRKCLVKWLEVRCVCPMCN).

In terms of tissue distribution, widely expressed in several tissues and cell lines.

It localises to the golgi apparatus. Its subcellular location is the endoplasmic reticulum. The protein resides in the membrane. In terms of biological role, may induce necrosis and apoptosis. May play a role in cell viability. In Homo sapiens (Human), this protein is RING finger protein 122 (RNF122).